The following is a 122-amino-acid chain: Large ribosomal subunit protein uL14 (122 aa).

It belongs to the universal ribosomal protein uL14 family. In terms of assembly, part of the 50S ribosomal subunit. Forms a cluster with proteins L3 and L19. In the 70S ribosome, L14 and L19 interact and together make contacts with the 16S rRNA in bridges B5 and B8.

Its function is as follows. Binds to 23S rRNA. Forms part of two intersubunit bridges in the 70S ribosome. This chain is Large ribosomal subunit protein uL14, found in Shewanella sediminis (strain HAW-EB3).